Here is a 134-residue protein sequence, read N- to C-terminus: Profilin-3 (134 aa).

Cysteines 13 and 118 form a disulfide. The short motif at Ala-84–Thr-100 is the Involved in PIP2 interaction element. Thr-114 is modified (phosphothreonine).

This sequence belongs to the profilin family. Occurs in many kinds of cells as a complex with monomeric actin in a 1:1 ratio. Post-translationally, phosphorylated by MAP kinases.

The protein resides in the cytoplasm. It is found in the cytoskeleton. In terms of biological role, binds to actin and affects the structure of the cytoskeleton. At high concentrations, profilin prevents the polymerization of actin, whereas it enhances it at low concentrations. This Olea europaea (Common olive) protein is Profilin-3.